The primary structure comprises 343 residues: Putative outer membrane protein y4fJ (343 aa).

The first 17 residues, 1–17, serve as a signal peptide directing secretion; that stretch reads MRMNFSTVLLGSSVALA.

Belongs to the alphaproteobacteria porin family.

Its subcellular location is the cell outer membrane. Functionally, may act as an outer membrane pore. The polypeptide is Putative outer membrane protein y4fJ (Sinorhizobium fredii (strain NBRC 101917 / NGR234)).